The primary structure comprises 1072 residues: Carbamoyl phosphate synthase large chain (1072 aa).

Positions Met-1–Glu-401 are carboxyphosphate synthetic domain. 12 residues coordinate ATP: Arg-129, Arg-169, Gly-175, Gly-176, Lys-208, Ile-210, Glu-215, Gly-241, Val-242, His-243, Gln-284, and Glu-298. Residues Arg-133–Val-327 enclose the ATP-grasp 1 domain. Gln-284, Glu-298, and Asn-300 together coordinate Mg(2+). Mn(2+) contacts are provided by Gln-284, Glu-298, and Asn-300. The tract at residues Leu-402–Ser-546 is oligomerization domain. Residues Ile-547–Gly-929 are carbamoyl phosphate synthetic domain. Positions Glu-671 to Leu-861 constitute an ATP-grasp 2 domain. ATP contacts are provided by Arg-707, Arg-746, Glu-752, Gly-777, Val-778, His-779, Ser-780, Gln-820, and Glu-832. Residues Gln-820, Glu-832, and Asn-834 each contribute to the Mg(2+) site. Mn(2+) is bound by residues Gln-820, Glu-832, and Asn-834. Residues Ile-930–Ala-1072 form the MGS-like domain. The segment at Ile-930–Ala-1072 is allosteric domain.

Belongs to the CarB family. As to quaternary structure, composed of two chains; the small (or glutamine) chain promotes the hydrolysis of glutamine to ammonia, which is used by the large (or ammonia) chain to synthesize carbamoyl phosphate. Tetramer of heterodimers (alpha,beta)4. Mg(2+) serves as cofactor. Requires Mn(2+) as cofactor.

It carries out the reaction hydrogencarbonate + L-glutamine + 2 ATP + H2O = carbamoyl phosphate + L-glutamate + 2 ADP + phosphate + 2 H(+). The catalysed reaction is hydrogencarbonate + NH4(+) + 2 ATP = carbamoyl phosphate + 2 ADP + phosphate + 2 H(+). It functions in the pathway amino-acid biosynthesis; L-arginine biosynthesis; carbamoyl phosphate from bicarbonate: step 1/1. It participates in pyrimidine metabolism; UMP biosynthesis via de novo pathway; (S)-dihydroorotate from bicarbonate: step 1/3. In terms of biological role, large subunit of the glutamine-dependent carbamoyl phosphate synthetase (CPSase). CPSase catalyzes the formation of carbamoyl phosphate from the ammonia moiety of glutamine, carbonate, and phosphate donated by ATP, constituting the first step of 2 biosynthetic pathways, one leading to arginine and/or urea and the other to pyrimidine nucleotides. The large subunit (synthetase) binds the substrates ammonia (free or transferred from glutamine from the small subunit), hydrogencarbonate and ATP and carries out an ATP-coupled ligase reaction, activating hydrogencarbonate by forming carboxy phosphate which reacts with ammonia to form carbamoyl phosphate. In Bacillus thuringiensis (strain Al Hakam), this protein is Carbamoyl phosphate synthase large chain.